We begin with the raw amino-acid sequence, 580 residues long: MKASQFFISTLKEAPADAEVVSHKLMTRAGMIKKLGAGIYSLMPMGLRVVRKVEQIVREEMNRAGAVELVMPVVQPAELWQETGRFESNGPELLRIKDRHGRDFVVQPTSEEVVTDIARQEIKSYKQLPKNLYQIQTKFRDERRPRFGLMRGREFIMKDAYSFDRDQASAKASYQVMAAAYRRIFDRFGLTYRAVAADSGAIGGDLSEEFQVIAATGEDAIVYCPGSDYAANMEKAEALAPSGPRAAPKQAFAKTATPGKSTCADVAELLQVPLQHTVKSLVLATDTLNKEGAIVKTQIWLLLLRGDHDMNEVKVGKLPGLAAFRFATVPEIEAHFGCQPGYLGPMGLRQPVQLVVDREVALMSDWICGANEPDFHITGVNWGRDLPEPALVADLRNVVAGDASPDGQGVLAIERGIEIGHVFYLGTKYSQAMNATFLDVNGKPQFMEMGCYGIGITRLPAAAIEQNHDERGIIWPDALAPFTVVLCPISPERFPDVKAASDKLYAELLAAGVDVILDDRGERPGAMFADWELIGVPHRVTIGDRGLKAGEVEYQHRRDSAATTVGVTAIFSLLQAKLKA.

Belongs to the class-II aminoacyl-tRNA synthetase family. ProS type 1 subfamily. As to quaternary structure, homodimer.

The protein localises to the cytoplasm. It carries out the reaction tRNA(Pro) + L-proline + ATP = L-prolyl-tRNA(Pro) + AMP + diphosphate. In terms of biological role, catalyzes the attachment of proline to tRNA(Pro) in a two-step reaction: proline is first activated by ATP to form Pro-AMP and then transferred to the acceptor end of tRNA(Pro). As ProRS can inadvertently accommodate and process non-cognate amino acids such as alanine and cysteine, to avoid such errors it has two additional distinct editing activities against alanine. One activity is designated as 'pretransfer' editing and involves the tRNA(Pro)-independent hydrolysis of activated Ala-AMP. The other activity is designated 'posttransfer' editing and involves deacylation of mischarged Ala-tRNA(Pro). The misacylated Cys-tRNA(Pro) is not edited by ProRS. The chain is Proline--tRNA ligase from Albidiferax ferrireducens (strain ATCC BAA-621 / DSM 15236 / T118) (Rhodoferax ferrireducens).